The chain runs to 342 residues: MWFGGGPIDAAGALRGFVREAGGCAVVDGGLGTELEAHGADLHDALWSAKCLASAPHLIRKVHLDYLEAGADVIISASYQATIEGFQSRGFSRDESEELLRRSVHVAQEARRVFAAEGDRSSRRGRPPALVAASVGSYGAYRADGSEYSGDYGKSMTKEDLKNFHRRRLQVLAGAGPDLIAFETIPNKLEAQVYAELLEENGIRIPAWFSFTSKDGVNAASGDPINECAAVADSCPRVDAVGVNCTAPRFIHGLILSIKKVTSKPIVVYPNSGETYVAETNEWVDSDGATGTDDFVSRVGEWRRAGAALIGGCCRTSPATVRAIARAVREAEYDDIPAVAVL.

The region spanning 13-328 (ALRGFVREAG…ATVRAIARAV (316 aa)) is the Hcy-binding domain. Zn(2+) contacts are provided by Cys245, Cys313, and Cys314.

As to quaternary structure, monomer. Zn(2+) serves as cofactor.

The enzyme catalyses S-methyl-L-methionine + L-homocysteine = 2 L-methionine + H(+). In terms of biological role, catalyzes methyl transfer from S-methylmethionine (SMM) to adenosyl-L-homocysteine (AdoMet). SMM degradation (by HMT-1, HMT-2, HMT-3 and HMT-4) and biosynthesis (by MMT1) constitute the SMM cycle in plants, which is probably required to achieve short term control of AdoMet level. This is Homocysteine S-methyltransferase 4 (HMT-4) from Zea mays (Maize).